The chain runs to 328 residues: Probable D,D-dipeptide transport ATP-binding protein DdpD (328 aa).

Residues 6-257 (LDIQQLHLSF…PRHPYTIGLL (252 aa)) form the ABC transporter domain. 42-49 (GESGSGKS) contributes to the ATP binding site.

This sequence belongs to the ABC transporter superfamily. The complex is composed of two ATP-binding proteins (DdpD and DdpF), two transmembrane proteins (DdpB and DdpC) and a solute-binding protein (DdpA).

Its subcellular location is the cell inner membrane. In terms of biological role, part of the ABC transporter complex DdpABCDF, which is probably involved in D,D-dipeptide transport. Probably responsible for energy coupling to the transport system. The polypeptide is Probable D,D-dipeptide transport ATP-binding protein DdpD (Escherichia coli (strain K12)).